Reading from the N-terminus, the 105-residue chain is Small ribosomal subunit protein uS10 (105 aa).

Belongs to the universal ribosomal protein uS10 family. As to quaternary structure, part of the 30S ribosomal subunit.

Functionally, involved in the binding of tRNA to the ribosomes. The protein is Small ribosomal subunit protein uS10 of Phytoplasma australiense.